The following is a 620-amino-acid chain: Putative ribonuclease H protein At1g65750 (620 aa).

The region spanning 456–586 (CVGWVKVNTD…ADGLANYAFS (131 aa)) is the RNase H type-1 domain. Mg(2+)-binding residues include Asp465, Glu505, Asp529, and Asp578.

The cofactor is Mg(2+).

It carries out the reaction Endonucleolytic cleavage to 5'-phosphomonoester.. The protein is Putative ribonuclease H protein At1g65750 of Arabidopsis thaliana (Mouse-ear cress).